Consider the following 66-residue polypeptide: Beta-toxin Cbo4 (66 aa).

One can recognise an LCN-type CS-alpha/beta domain in the interval 1-66 (KEGYIVDYHT…VWPLPNKRCK (66 aa)). Intrachain disulfides connect C12–C65, C16–C41, C25–C46, and C29–C48. Position 66 is a lysine amide (K66).

It belongs to the long (4 C-C) scorpion toxin superfamily. Sodium channel inhibitor family. Beta subfamily. Expressed by the venom gland.

Its subcellular location is the secreted. Beta toxins bind voltage-independently at site-4 of sodium channels and shift the voltage of activation toward more negative potentials thereby affecting sodium channel activation and promoting spontaneous and repetitive firing. Is active on the human voltage-gated sodium channels Nav1.4/SCN4A, Nav1.5/SCN5A and Nav1.6/SCN8A when tested at 200 nM. In vivo, is toxic to mice when intraperitoneally injected. In Centruroides bonito (Scorpion), this protein is Beta-toxin Cbo4.